Here is a 433-residue protein sequence, read N- to C-terminus: Probable exopolygalacturonase X (433 aa).

The signal sequence occupies residues 1 to 21; sequence MKLTQATTLLLSLGLSLPVEG. Residues 30–54 are disordered; it reads VGPKPPFRPLPASTPRNKTCQVQSN. Polar residues predominate over residues 43–54; sequence TPRNKTCQVQSN. Residues asparagine 46, asparagine 127, and asparagine 197 are each glycosylated (N-linked (GlcNAc...) asparagine). The PbH1 1 repeat unit spans residues 229–250; that stretch reads SSNIVIQNSVINNGDDCVSFKP. The active-site Proton donor is the aspartate 243. A disulfide bond links cysteine 245 and cysteine 262. 2 N-linked (GlcNAc...) asparagine glycosylation sites follow: asparagine 251 and asparagine 263. Residues 252–272 form a PbH1 2 repeat; the sequence is STEILVQNLHCNGSHGISVGS. Histidine 266 is a catalytic residue. 5 N-linked (GlcNAc...) asparagine glycosylation sites follow: asparagine 290, asparagine 295, asparagine 327, asparagine 352, and asparagine 362. Residues 325–346 form a PbH1 3 repeat; the sequence is VQNITYDKMYIENVDWAIEVTQ. The stretch at 360–403 is one PbH1 4 repeat; that stretch reads PSNLTISDVYFNDLTGVTSGKNDPNVGTIICSSPDVCSGIHATN. A disulfide bridge links cysteine 390 with cysteine 396.

The protein belongs to the glycosyl hydrolase 28 family.

The protein localises to the secreted. It catalyses the reaction [(1-&gt;4)-alpha-D-galacturonosyl](n) + H2O = alpha-D-galacturonate + [(1-&gt;4)-alpha-D-galacturonosyl](n-1). Functionally, specific in hydrolyzing the terminal glycosidic bond of polygalacturonic acid and oligogalacturonates. The polypeptide is Probable exopolygalacturonase X (pgaX) (Aspergillus flavus (strain ATCC 200026 / FGSC A1120 / IAM 13836 / NRRL 3357 / JCM 12722 / SRRC 167)).